The following is a 280-amino-acid chain: Cell division protein SepF (280 aa).

The tract at residues 22–117 is disordered; sequence DYVDDRAPRA…DDYPEDAYGE (96 aa). 2 stretches are compositionally biased toward basic and acidic residues: residues 25–36 and 53–83; these read DDRAPRASERGG and RYGE…GADR.

It belongs to the SepF family. As to quaternary structure, homodimer. Interacts with FtsZ.

The protein resides in the cytoplasm. Its function is as follows. Cell division protein that is part of the divisome complex and is recruited early to the Z-ring. Probably stimulates Z-ring formation, perhaps through the cross-linking of FtsZ protofilaments. Its function overlaps with FtsA. This chain is Cell division protein SepF, found in Nocardia farcinica (strain IFM 10152).